Consider the following 195-residue polypeptide: MEELLSAVIIGIVLGWLCKDWLHFPNGSNLYVLITLIFFVGIQLRNNGISLKEVLLNKQGLMMGAIFTLSSLIGGVISAFFLSMPITQGLAFSSGFGWYSLSSVVLTNAWGPMQGSIAFFNDLSREILSLFLIPLFMQHYRSTAIEITGATALDCTLPIIQKSGGIEVTPIAISFGMVTNLLPPLLLVFFSSFPI.

Transmembrane regions (helical) follow at residues 4–24, 30–50, 61–81, 86–106, 117–137, and 170–190; these read LLSAVIIGIVLGWLCKDWLHF, LYVLITLIFFVGIQLRNNGIS, LMMGAIFTLSSLIGGVISAFF, ITQGLAFSSGFGWYSLSSVVL, IAFFNDLSREILSLFLIPLFM, and PIAISFGMVTNLLPPLLLVFF.

Belongs to the LysO family.

The protein localises to the cell inner membrane. Its function is as follows. Mediates export of lysine. The chain is Putative lysine exporter from Haemophilus influenzae (strain ATCC 51907 / DSM 11121 / KW20 / Rd).